Consider the following 377-residue polypeptide: Nitric oxide reductase FlRd-NAD(+) reductase (377 aa).

The protein belongs to the FAD-dependent oxidoreductase family. FAD is required as a cofactor.

The protein resides in the cytoplasm. The enzyme catalyses 2 reduced [nitric oxide reductase rubredoxin domain] + NAD(+) + H(+) = 2 oxidized [nitric oxide reductase rubredoxin domain] + NADH. It participates in nitrogen metabolism; nitric oxide reduction. In terms of biological role, one of at least two accessory proteins for anaerobic nitric oxide (NO) reductase. Reduces the rubredoxin moiety of NO reductase. The polypeptide is Nitric oxide reductase FlRd-NAD(+) reductase (Escherichia coli O45:K1 (strain S88 / ExPEC)).